The primary structure comprises 380 residues: Chaperone protein DnaJ (380 aa).

The region spanning 5–69 is the J domain; that stretch reads DFYEVLGVGR…QKKAAYDQYG (65 aa). The CR-type zinc-finger motif lies at 135–213; the sequence is GCSKEIRVPT…CHGQGRVEKT (79 aa). Zn(2+) contacts are provided by C148, C151, C165, C168, C187, C190, C201, and C204. CXXCXGXG motif repeat units lie at residues 148–155, 165–172, 187–194, and 201–208; these read CDSCDGSG, CGTCHGQG, CPHCHGRG, and CNSCHGQG.

It belongs to the DnaJ family. In terms of assembly, homodimer. It depends on Zn(2+) as a cofactor.

It is found in the cytoplasm. In terms of biological role, participates actively in the response to hyperosmotic and heat shock by preventing the aggregation of stress-denatured proteins and by disaggregating proteins, also in an autonomous, DnaK-independent fashion. Unfolded proteins bind initially to DnaJ; upon interaction with the DnaJ-bound protein, DnaK hydrolyzes its bound ATP, resulting in the formation of a stable complex. GrpE releases ADP from DnaK; ATP binding to DnaK triggers the release of the substrate protein, thus completing the reaction cycle. Several rounds of ATP-dependent interactions between DnaJ, DnaK and GrpE are required for fully efficient folding. Also involved, together with DnaK and GrpE, in the DNA replication of plasmids through activation of initiation proteins. This Photobacterium profundum (strain SS9) protein is Chaperone protein DnaJ.